The chain runs to 912 residues: Nonsense-mediated mRNA decay factor SMG8 (912 aa).

The tract at residues 565 to 630 (EHSNRTPDAS…GEDEDETLEQ (66 aa)) is disordered. Residues 570–602 (TPDASTHPPMTNENSPHLSGSQKSQDSASNLTF) are compositionally biased toward polar residues. Over residues 604–614 (MDEKRDEENKS) the composition is skewed to basic and acidic residues.

Belongs to the SMG8 family.

Involved in nonsense-mediated decay (NMD) of mRNAs containing premature stop codons. Probable component of kinase complex containing SMG1 and recruited to stalled ribosomes. The chain is Nonsense-mediated mRNA decay factor SMG8 from Culex quinquefasciatus (Southern house mosquito).